Here is a 122-residue protein sequence, read N- to C-terminus: V-type ATPase assembly factor PKR1 (122 aa).

Over M1 to Q20 the chain is Cytoplasmic. Residues L21 to Y41 form a helical membrane-spanning segment. Residues A42–N46 lie on the Lumenal side of the membrane. Residues I47–I67 form a helical membrane-spanning segment. At N68–A122 the chain is on the cytoplasmic side. Basic and acidic residues predominate over residues D82–S103. The segment at D82–A122 is disordered. The segment covering G104–A122 has biased composition (polar residues).

It belongs to the PKR1 family.

The protein localises to the endoplasmic reticulum membrane. Its function is as follows. Functions together with the other V-type ATPase assembly factors in the endoplasmic reticulum to efficiently assemble the V-type ATPase membrane sector V(0). This Saccharomyces cerevisiae (strain ATCC 204508 / S288c) (Baker's yeast) protein is V-type ATPase assembly factor PKR1 (PKR1).